The sequence spans 361 residues: Alanine racemase (361 aa).

The active-site Proton acceptor; specific for D-alanine is the lysine 34. Lysine 34 is modified (N6-(pyridoxal phosphate)lysine). Residue arginine 129 participates in substrate binding. Tyrosine 254 functions as the Proton acceptor; specific for L-alanine in the catalytic mechanism. Methionine 302 contributes to the substrate binding site.

It belongs to the alanine racemase family. Requires pyridoxal 5'-phosphate as cofactor.

It carries out the reaction L-alanine = D-alanine. The catalysed reaction is L-serine = D-serine. It participates in amino-acid biosynthesis; D-alanine biosynthesis; D-alanine from L-alanine: step 1/1. Catalyzes the interconversion of L-alanine and D-alanine. Likely plays an important role in supplying D-alanine, which is an indispensable constituent in the biosynthesis of bacterial cell-wall peptidoglycan. To a lesser extent, is also able to racemize L-serine and D-serine. Does not act on other proteinogenic amino-acids. This is Alanine racemase (alr1) from Vibrio cholerae serotype O1 (strain ATCC 39315 / El Tor Inaba N16961).